Consider the following 288-residue polypeptide: 5,10-methylenetetrahydrofolate reductase (288 aa).

FAD is bound by residues alanine 51, histidine 73, glycine 106, aspartate 107, alanine 118, tyrosine 140, histidine 144, and lysine 159. Residue aspartate 107 participates in (6S)-5-methyl-5,6,7,8-tetrahydrofolate binding. Glutamine 175 lines the (6S)-5-methyl-5,6,7,8-tetrahydrofolate pocket. Glutamine 175 is an NADH binding site.

It belongs to the methylenetetrahydrofolate reductase family. FAD is required as a cofactor.

It catalyses the reaction (6S)-5-methyl-5,6,7,8-tetrahydrofolate + NAD(+) = (6R)-5,10-methylene-5,6,7,8-tetrahydrofolate + NADH + H(+). The protein operates within one-carbon metabolism; tetrahydrofolate interconversion. It functions in the pathway amino-acid biosynthesis; L-methionine biosynthesis via de novo pathway. Functionally, catalyzes the NADH-dependent reduction of 5,10-methylenetetrahydrofolate to 5-methyltetrahydrofolate. Is required to provide the methyl group necessary for methionine synthetase to convert homocysteine to methionine; the methyl group is given by 5-methyltetrahydrofolate. Is required for Sphingobium SYK-6 to grow on vanillate or syringate as the sole source of carbon. This Sphingobium sp. (strain NBRC 103272 / SYK-6) protein is 5,10-methylenetetrahydrofolate reductase.